A 192-amino-acid polypeptide reads, in one-letter code: Putative manganese efflux pump MntP (192 aa).

6 consecutive transmembrane segments (helical) span residues 2–22 (IAIIVQTLLISVSVAMDAFAV), 41–61 (SALWFGGSQALFLILGHYAAS), 62–82 (AFSAYVTAFDHWIIFGLLAFI), 109–129 (MLPLAVACSIDAFAVGVSLAF), 136–156 (FAILCISVVTGLFSAAGLYIG), and 172–192 (GVVLILIGVKVLLEHLGVIAF).

It belongs to the MntP (TC 9.B.29) family.

The protein localises to the cell membrane. Its function is as follows. Probably functions as a manganese efflux pump. The chain is Putative manganese efflux pump MntP from Bifidobacterium longum subsp. infantis (strain ATCC 15697 / DSM 20088 / JCM 1222 / NCTC 11817 / S12).